Consider the following 157-residue polypeptide: Probable succinate transporter subunit YjjB (157 aa).

4 consecutive transmembrane segments (helical) span residues 8-28, 55-75, 87-107, and 129-149; these read LALM…AMVF, AGFN…SIGI, VFTV…TAMI, and FLKA…PGLW.

It belongs to the ThrE exporter (TC 2.A.79) family. The transporter is composed of YjjB and YjjP.

It is found in the cell inner membrane. In terms of biological role, involved in succinate export with YjjP. Both proteins are required for export. This is Probable succinate transporter subunit YjjB from Salmonella agona (strain SL483).